The following is a 138-amino-acid chain: Small ribosomal subunit protein uS11c (138 aa).

It belongs to the universal ribosomal protein uS11 family. As to quaternary structure, part of the 30S ribosomal subunit.

Its subcellular location is the plastid. It is found in the chloroplast. This chain is Small ribosomal subunit protein uS11c, found in Phaseolus vulgaris (Kidney bean).